Consider the following 370-residue polypeptide: Dihydroorotate dehydrogenase (quinone) (370 aa).

Residues 80-84 (AGFDK) and Thr-104 contribute to the FMN site. Lys-84 is a binding site for substrate. 129-133 (NRMGF) provides a ligand contact to substrate. Residues Asn-157 and Asn-190 each coordinate FMN. Asn-190 lines the substrate pocket. Ser-193 serves as the catalytic Nucleophile. Residue Asn-195 coordinates substrate. Residues Lys-226 and Thr-254 each contribute to the FMN site. A substrate-binding site is contributed by 255 to 256 (NT). FMN is bound by residues Gly-278, Gly-307, and 328 to 329 (YT).

It belongs to the dihydroorotate dehydrogenase family. Type 2 subfamily. In terms of assembly, monomer. The cofactor is FMN.

The protein resides in the cell membrane. It catalyses the reaction (S)-dihydroorotate + a quinone = orotate + a quinol. It participates in pyrimidine metabolism; UMP biosynthesis via de novo pathway; orotate from (S)-dihydroorotate (quinone route): step 1/1. Catalyzes the conversion of dihydroorotate to orotate with quinone as electron acceptor. The protein is Dihydroorotate dehydrogenase (quinone) of Mycolicibacterium paratuberculosis (strain ATCC BAA-968 / K-10) (Mycobacterium paratuberculosis).